Here is a 226-residue protein sequence, read N- to C-terminus: MTPNDTENAARPLPEGAVDPAQDAAGAPDTLAPAAQADAVAALEAEKLDLKNKLLRALADMENLRRRTEREVADARTYAVTNFARDMLNVADNVRRALDSVPVEDRAAADGALKALLDGIELTGRDLAKTLERHGVRAVEPQGQRFDPNLHQAMFEVPNPDVANGTVVQVVQTGYVIGDRVLRPALVGVSKGGPKAAEASKPAGEAPKPAGEAPKPAGDGQKPAEA.

Disordered stretches follow at residues 1 to 31 and 189 to 226; these read MTPNDTENAARPLPEGAVDPAQDAAGAPDTL and VSKGGPKAAEASKPAGEAPKPAGEAPKPAGDGQKPAEA. Low complexity predominate over residues 192–218; sequence GGPKAAEASKPAGEAPKPAGEAPKPAG.

The protein belongs to the GrpE family. In terms of assembly, homodimer.

It localises to the cytoplasm. Functionally, participates actively in the response to hyperosmotic and heat shock by preventing the aggregation of stress-denatured proteins, in association with DnaK and GrpE. It is the nucleotide exchange factor for DnaK and may function as a thermosensor. Unfolded proteins bind initially to DnaJ; upon interaction with the DnaJ-bound protein, DnaK hydrolyzes its bound ATP, resulting in the formation of a stable complex. GrpE releases ADP from DnaK; ATP binding to DnaK triggers the release of the substrate protein, thus completing the reaction cycle. Several rounds of ATP-dependent interactions between DnaJ, DnaK and GrpE are required for fully efficient folding. This is Protein GrpE from Methylobacterium nodulans (strain LMG 21967 / CNCM I-2342 / ORS 2060).